A 557-amino-acid polypeptide reads, in one-letter code: Elongator complex protein 3 (557 aa).

The Radical SAM core domain occupies 91 to 381 (RTASGIAVVA…YRVQRDIPMP (291 aa)). [4Fe-4S] cluster is bound by residues C108, C118, and C121. Acetyl-CoA is bound at residue K173. Positions 405–557 (TTCRDVRTRE…LDGPYMSKRI (153 aa)) constitute an N-acetyltransferase domain. K453 participates in a covalent cross-link: Glycyl lysine isopeptide (Lys-Gly) (interchain with G-Cter in ubiquitin). Acetyl-CoA-binding positions include 485 to 488 (ELHV), 508 to 510 (FGT), and Y541.

It belongs to the ELP3 family. Component of the elongator complex which consists of ELP1/IKI3, ELP2, ELP3, ELP4, ELP5/IKI1 and ELP6. The elongator complex is composed of two copies of the Elp123 subcomplex (composed of ELP1/IKI3, ELP2 and ELP3) and two copies of the Elp456 subcomplex (composed of ELP4, ELP5/IKI1 and ELP6). The Elp123 subcomplex forms a two-lobed scaffold, which binds the Elp456 subcomplex asymmetrically. In each lobe, ELP2 is tightly sandwiched between ELP1/IKI3 and ELP3. The Elp123 subcomplex binds tRNA through ELP1/IKI3 and ELP3 and can bind 2 tRNAs simultaneously. tRNA-binding induces conformational rearrangements which precisely position the targeted anticodon base in the active site. ELP3 interacts with KTI11/DPH3. ELP3 interacts with KTI12. The Elp456 subcomplex binds tRNA and has ATPase activity. It depends on [4Fe-4S] cluster as a cofactor.

The protein resides in the cytoplasm. It localises to the nucleus. The catalysed reaction is uridine(34) in tRNA + acetyl-CoA + S-adenosyl-L-methionine + H2O = 5-(carboxymethyl)uridine(34) in tRNA + 5'-deoxyadenosine + L-methionine + CoA + 2 H(+). It participates in tRNA modification; 5-methoxycarbonylmethyl-2-thiouridine-tRNA biosynthesis. Functionally, catalytic tRNA acetyltransferase subunit of the elongator complex which is required for multiple tRNA modifications, including mcm5U (5-methoxycarbonylmethyl uridine), mcm5s2U (5-methoxycarbonylmethyl-2-thiouridine), and ncm5U (5-carbamoylmethyl uridine). In the elongator complex, acts as a tRNA uridine(34) acetyltransferase, which mediates formation of carboxymethyluridine in the wobble base at position 34 in tRNAs. The complex functions as a gamma-toxin target (TOT); disruption of the complex confers resistance to Kluyveromyces lactis toxin zymocin (pGKL1 killer toxin). May also be involved in sensitivity to Pichia inositovora toxin. Independently, ELP3 may be involved in polarized exocytosis. The chain is Elongator complex protein 3 from Saccharomyces cerevisiae (strain ATCC 204508 / S288c) (Baker's yeast).